The primary structure comprises 348 residues: (+)-germacrene D synthase (348 aa).

Residues aspartate 97, aspartate 101, asparagine 242, and serine 246 each coordinate Mg(2+). The DDXXD motif motif lies at 97–101 (DDILD).

It belongs to the terpene synthase family. It depends on Mg(2+) as a cofactor.

The catalysed reaction is (2E,6E)-farnesyl diphosphate = (+)-germacrene D + diphosphate. Its pathway is secondary metabolite biosynthesis; terpenoid biosynthesis. In terms of biological role, sesquiterpene synthase converting farnesyl diphosphate to eight sesquiterpenes, with (+)-germacrene D and an unidentified oxygenated sesquiterpene as the major products. Has no diterpene synthase activity. This chain is (+)-germacrene D synthase, found in Selaginella moellendorffii (Spikemoss).